Reading from the N-terminus, the 370-residue chain is Queuine tRNA-ribosyltransferase (370 aa).

Residue aspartate 93 is the Proton acceptor of the active site. Substrate-binding positions include 93 to 97 (DSGGF), aspartate 147, glutamine 190, and glycine 217. The RNA binding stretch occupies residues 248–254 (GVGTPDY). Aspartate 267 (nucleophile) is an active-site residue. The interval 272–276 (TRVAR) is RNA binding; important for wobble base 34 recognition. 4 residues coordinate Zn(2+): cysteine 305, cysteine 307, cysteine 310, and histidine 336.

It belongs to the queuine tRNA-ribosyltransferase family. As to quaternary structure, homodimer. Within each dimer, one monomer is responsible for RNA recognition and catalysis, while the other monomer binds to the replacement base PreQ1. Requires Zn(2+) as cofactor.

It catalyses the reaction 7-aminomethyl-7-carbaguanine + guanosine(34) in tRNA = 7-aminomethyl-7-carbaguanosine(34) in tRNA + guanine. Its pathway is tRNA modification; tRNA-queuosine biosynthesis. Its function is as follows. Catalyzes the base-exchange of a guanine (G) residue with the queuine precursor 7-aminomethyl-7-deazaguanine (PreQ1) at position 34 (anticodon wobble position) in tRNAs with GU(N) anticodons (tRNA-Asp, -Asn, -His and -Tyr). Catalysis occurs through a double-displacement mechanism. The nucleophile active site attacks the C1' of nucleotide 34 to detach the guanine base from the RNA, forming a covalent enzyme-RNA intermediate. The proton acceptor active site deprotonates the incoming PreQ1, allowing a nucleophilic attack on the C1' of the ribose to form the product. After dissociation, two additional enzymatic reactions on the tRNA convert PreQ1 to queuine (Q), resulting in the hypermodified nucleoside queuosine (7-(((4,5-cis-dihydroxy-2-cyclopenten-1-yl)amino)methyl)-7-deazaguanosine). This chain is Queuine tRNA-ribosyltransferase, found in Natranaerobius thermophilus (strain ATCC BAA-1301 / DSM 18059 / JW/NM-WN-LF).